The following is a 185-amino-acid chain: Threonylcarbamoyl-AMP synthase (185 aa).

The YrdC-like domain occupies serine 4–glycine 185.

It belongs to the SUA5 family. TsaC subfamily.

The protein localises to the cytoplasm. The catalysed reaction is L-threonine + hydrogencarbonate + ATP = L-threonylcarbamoyladenylate + diphosphate + H2O. Its function is as follows. Required for the formation of a threonylcarbamoyl group on adenosine at position 37 (t(6)A37) in tRNAs that read codons beginning with adenine. Catalyzes the conversion of L-threonine, HCO(3)(-)/CO(2) and ATP to give threonylcarbamoyl-AMP (TC-AMP) as the acyladenylate intermediate, with the release of diphosphate. In Pseudomonas putida (strain ATCC 700007 / DSM 6899 / JCM 31910 / BCRC 17059 / LMG 24140 / F1), this protein is Threonylcarbamoyl-AMP synthase.